A 522-amino-acid polypeptide reads, in one-letter code: Thiamine biosynthetic bifunctional enzyme TH1, chloroplastic (522 aa).

Residues 1 to 36 (MNSLGGIRSWPANWRSTTASMTTTESVRKVPQVLTV) constitute a chloroplast transit peptide. Residues 345 to 349 (QLREK) and N377 each bind 4-amino-2-methyl-5-(diphosphooxymethyl)pyrimidine. Residues D378 and D397 each coordinate Mg(2+). Residue S416 coordinates 4-amino-2-methyl-5-(diphosphooxymethyl)pyrimidine. 442–444 (TNT) lines the 2-[(2R,5Z)-2-carboxy-4-methylthiazol-5(2H)-ylidene]ethyl phosphate pocket. Residue K445 participates in 4-amino-2-methyl-5-(diphosphooxymethyl)pyrimidine binding. 2-[(2R,5Z)-2-carboxy-4-methylthiazol-5(2H)-ylidene]ethyl phosphate is bound by residues G472 and 495–496 (VS).

It belongs to the thiamine-phosphate synthase family. Mg(2+) is required as a cofactor.

The protein localises to the plastid. Its subcellular location is the chloroplast. The catalysed reaction is 2-[(2R,5Z)-2-carboxy-4-methylthiazol-5(2H)-ylidene]ethyl phosphate + 4-amino-2-methyl-5-(diphosphooxymethyl)pyrimidine + 2 H(+) = thiamine phosphate + CO2 + diphosphate. The enzyme catalyses 2-(2-carboxy-4-methylthiazol-5-yl)ethyl phosphate + 4-amino-2-methyl-5-(diphosphooxymethyl)pyrimidine + 2 H(+) = thiamine phosphate + CO2 + diphosphate. It catalyses the reaction 4-methyl-5-(2-phosphooxyethyl)-thiazole + 4-amino-2-methyl-5-(diphosphooxymethyl)pyrimidine + H(+) = thiamine phosphate + diphosphate. It carries out the reaction 4-amino-5-hydroxymethyl-2-methylpyrimidine + ATP = 4-amino-2-methyl-5-(phosphooxymethyl)pyrimidine + ADP + H(+). The protein operates within cofactor biosynthesis; thiamine diphosphate biosynthesis; thiamine phosphate from 4-amino-2-methyl-5-diphosphomethylpyrimidine and 4-methyl-5-(2-phosphoethyl)-thiazole: step 1/1. Its pathway is cofactor biosynthesis; thiamine diphosphate biosynthesis; 4-amino-2-methyl-5-diphosphomethylpyrimidine from 5-amino-1-(5-phospho-D-ribosyl)imidazole: step 2/3. In terms of biological role, essential for thiamine biosynthesis. Bifunctional enzyme that catalyzes the phosphorylation of hydroxymethylpyrimidine phosphate (HMP-P) to HMP-PP and condenses 4-methyl-5-(beta-hydroxyethyl)thiazole monophosphate (THZ-P) and 2-methyl-4-amino-5-hydroxymethyl pyrimidine pyrophosphate (HMP-PP) to form thiamine monophosphate (TMP). This is Thiamine biosynthetic bifunctional enzyme TH1, chloroplastic (TH1) from Arabidopsis thaliana (Mouse-ear cress).